We begin with the raw amino-acid sequence, 498 residues long: Zinc finger protein 79 (498 aa).

A disordered region spans residues Met1–Glu23. The KRAB domain occupies Thr38–Pro109. 11 C2H2-type zinc fingers span residues Tyr193–His215, Tyr221–His243, Tyr249–His271, Tyr277–His299, Tyr305–His327, Tyr333–His355, Tyr361–His383, Tyr389–His411, Tyr417–His439, Tyr445–His467, and Tyr473–His495.

The protein belongs to the krueppel C2H2-type zinc-finger protein family.

Its subcellular location is the nucleus. Functionally, may be involved in transcriptional regulation. This is Zinc finger protein 79 (ZNF79) from Homo sapiens (Human).